The sequence spans 69 residues: Conotoxin AbVIE (69 aa).

An N-terminal signal peptide occupies residues 1–17 (VLIIAVLFLTACQLTTA). Positions 18–40 (ETSSRGKQKHRALRSTDKYSRMT) are excised as a propeptide. Intrachain disulfides connect C43–C57, C50–C61, and C56–C66.

The protein belongs to the conotoxin O1 superfamily. As to expression, expressed by the venom duct.

Its subcellular location is the secreted. The chain is Conotoxin AbVIE from Conus abbreviatus (Abbreviated cone).